Here is an 884-residue protein sequence, read N- to C-terminus: E3 ubiquitin-protein ligase BRE1-like 1 (884 aa).

The interval 1-37 is disordered; it reads MGSTGEPDRKRRLSSSVAPGGGAPVSPAKRLAVAPTS. A coiled-coil region spans residues 49–86; sequence YKNQKLSEQLEAHKFEYRALENKFAGLKEKQRTHNETL. Positions 107–127 are disordered; the sequence is KSGSPNSSPGSGHNNVQKDGT. Positions 108–121 are enriched in low complexity; sequence SGSPNSSPGSGHNN. Coiled coils occupy residues 216–541, 580–663, 696–762, and 789–827; these read LNNV…ELKL, SKLE…LQQI, RNLQ…QSLD, and KKRI…KEYR. Residues 832-871 form an RING-type zinc finger; it reads CGICHDRQKEVVITKCYHLFCNQCIQKSLGNRQRRCPSCS.

Belongs to the BRE1 family.

It localises to the nucleus. It catalyses the reaction S-ubiquitinyl-[E2 ubiquitin-conjugating enzyme]-L-cysteine + [acceptor protein]-L-lysine = [E2 ubiquitin-conjugating enzyme]-L-cysteine + N(6)-ubiquitinyl-[acceptor protein]-L-lysine.. It participates in protein modification; protein ubiquitination. Its function is as follows. E3 ubiquitin-protein ligase that monoubiquitinates H2B to form H2BK143ub1. H2BK143ub1 gives a specific tag for epigenetic transcriptional activation and is also prerequisite for H3K4me and maybe H3K79me. It thereby plays a central role in histone code and gene regulation. Forms a ubiquitin ligase complex in cooperation with the E2 enzyme UBC2/RAD6. In Oryza sativa subsp. indica (Rice), this protein is E3 ubiquitin-protein ligase BRE1-like 1 (BRE1A).